A 134-amino-acid chain; its full sequence is Large ribosomal subunit protein eL32 (134 aa).

The protein belongs to the eukaryotic ribosomal protein eL32 family.

This is Large ribosomal subunit protein eL32 (RpL32) from Apis mellifera (Honeybee).